The primary structure comprises 233 residues: Antiholin-like protein LrgB (233 aa).

Helical transmembrane passes span 7–27 (INTP…ATFL), 33–53 (GFFL…FLKL), 63–83 (IGGD…AIPL), 97–117 (ILGG…LIAE), 124–144 (GIIA…PVSA), 152–172 (LTSL…SKLI), and 212–232 (ISLV…ATLL).

The protein belongs to the CidB/LrgB family. LrgB subfamily.

It localises to the cell membrane. Functionally, inhibits the expression or activity of extracellular murein hydrolases by interacting, possibly with LrgA, with the holin-like proteins CidA and/or CidB. The LrgAB and CidAB proteins may affect the proton motive force of the membrane. May be involved in programmed cell death (PCD), possibly triggering PCD in response to antibiotics and environmental stresses. This chain is Antiholin-like protein LrgB, found in Staphylococcus saprophyticus subsp. saprophyticus (strain ATCC 15305 / DSM 20229 / NCIMB 8711 / NCTC 7292 / S-41).